Reading from the N-terminus, the 356-residue chain is Histidinol-phosphate aminotransferase (356 aa).

The residue at position 214 (K214) is an N6-(pyridoxal phosphate)lysine.

Belongs to the class-II pyridoxal-phosphate-dependent aminotransferase family. Histidinol-phosphate aminotransferase subfamily. Homodimer. The cofactor is pyridoxal 5'-phosphate.

The catalysed reaction is L-histidinol phosphate + 2-oxoglutarate = 3-(imidazol-4-yl)-2-oxopropyl phosphate + L-glutamate. Its pathway is amino-acid biosynthesis; L-histidine biosynthesis; L-histidine from 5-phospho-alpha-D-ribose 1-diphosphate: step 7/9. In Escherichia coli O45:K1 (strain S88 / ExPEC), this protein is Histidinol-phosphate aminotransferase.